A 59-amino-acid polypeptide reads, in one-letter code: Single-pass membrane and coiled-coil domain-containing protein 4 (59 aa).

Residues 1–23 (MRQLKGKPKKETSKDKKERKQAM) form a disordered region. Over residues 9–22 (KKETSKDKKERKQA) the composition is skewed to basic and acidic residues. The stretch at 9–31 (KKETSKDKKERKQAMQEARQQIT) forms a coiled coil. Residues 32–52 (TVVLPTLAVVVLLIVVFVYVA) traverse the membrane as a helical segment.

Belongs to the SMCO4 family.

The protein localises to the membrane. This is Single-pass membrane and coiled-coil domain-containing protein 4 (SMCO4) from Homo sapiens (Human).